A 967-amino-acid chain; its full sequence is Leucine--tRNA ligase (967 aa).

Positions 43 to 53 (PYLSGHLHVGH) match the 'HIGH' region motif. The short motif at 650–654 (KMSKS) is the 'KMSKS' region element. Residue K653 coordinates ATP.

It belongs to the class-I aminoacyl-tRNA synthetase family.

It is found in the cytoplasm. It carries out the reaction tRNA(Leu) + L-leucine + ATP = L-leucyl-tRNA(Leu) + AMP + diphosphate. The protein is Leucine--tRNA ligase of Thermococcus kodakarensis (strain ATCC BAA-918 / JCM 12380 / KOD1) (Pyrococcus kodakaraensis (strain KOD1)).